Consider the following 359-residue polypeptide: Peptide chain release factor 1 (359 aa).

Residue Gln233 is modified to N5-methylglutamine.

This sequence belongs to the prokaryotic/mitochondrial release factor family. In terms of processing, methylated by PrmC. Methylation increases the termination efficiency of RF1.

The protein localises to the cytoplasm. Its function is as follows. Peptide chain release factor 1 directs the termination of translation in response to the peptide chain termination codons UAG and UAA. This is Peptide chain release factor 1 from Orientia tsutsugamushi (strain Ikeda) (Rickettsia tsutsugamushi).